The primary structure comprises 467 residues: UDP-N-acetylmuramoylalanine--D-glutamate ligase (467 aa).

Residue 121–127 (GTNGKST) participates in ATP binding.

It belongs to the MurCDEF family.

The protein resides in the cytoplasm. The enzyme catalyses UDP-N-acetyl-alpha-D-muramoyl-L-alanine + D-glutamate + ATP = UDP-N-acetyl-alpha-D-muramoyl-L-alanyl-D-glutamate + ADP + phosphate + H(+). It participates in cell wall biogenesis; peptidoglycan biosynthesis. Functionally, cell wall formation. Catalyzes the addition of glutamate to the nucleotide precursor UDP-N-acetylmuramoyl-L-alanine (UMA). The polypeptide is UDP-N-acetylmuramoylalanine--D-glutamate ligase (Chelativorans sp. (strain BNC1)).